The primary structure comprises 105 residues: TPR repeat-containing protein PA0015 (105 aa).

TPR repeat units lie at residues 17–50 (ALLR…DPKY) and 52–84 (AGWK…AATH).

This is TPR repeat-containing protein PA0015 from Pseudomonas aeruginosa (strain ATCC 15692 / DSM 22644 / CIP 104116 / JCM 14847 / LMG 12228 / 1C / PRS 101 / PAO1).